The primary structure comprises 142 residues: Large ribosomal subunit protein uL13 (142 aa).

This sequence belongs to the universal ribosomal protein uL13 family. As to quaternary structure, part of the 50S ribosomal subunit.

This protein is one of the early assembly proteins of the 50S ribosomal subunit, although it is not seen to bind rRNA by itself. It is important during the early stages of 50S assembly. The polypeptide is Large ribosomal subunit protein uL13 (Pseudomonas aeruginosa (strain LESB58)).